Consider the following 215-residue polypeptide: Kinetochore protein Spc25 (215 aa).

A coiled-coil region spans residues aspartate 43–alanine 114.

Belongs to the SPC25 family. As to quaternary structure, component of the Ndc80 complex, which is composed of Ndc80, Nuf2 and Spc25.

The protein resides in the nucleus. It localises to the chromosome. It is found in the centromere. The protein localises to the kinetochore. Functionally, acts as a component of the essential kinetochore-associated Ndc80 complex, which is required for chromosome segregation and spindle checkpoint activity during meiosis and mitosis. Required for kinetochore integrity and the organization of stable microtubule binding sites in the outer plate of the kinetochore. Participates in SAC signaling that responds specifically to disruptions in spindle microtubule dynamics. The NDC80 complex synergistically enhances the affinity of the SKA1 complex for microtubules and may allow the NDC80 complex to track depolymerizing microtubules. The chain is Kinetochore protein Spc25 from Drosophila ananassae (Fruit fly).